A 398-amino-acid chain; its full sequence is MSQLKYLITFSILLRFGFFFFGLYQDEYMPVKYTDIDYLVFNDASKFVYQGLSPYLRETYRYTPILAILLIPDNFGKYWYHFGKLLFMVSDVITGLIILKLLSKQQQLSEKKKMILSSIWLLNPMVITISTRGSAESVLTVMIMLSLYYLLDKDNVILSAIWLGLSIHFKIYPIIYLPSILYYLSSQETPFLASVPGINLVNAKNLKYIIITLTTLAVVNYLMFLKYGWEFIDNSYLYHVTRLDHRHNFSVYNMVLYYKSALLEDSNGFDIEKIAFVPQLLLSAVIIPLIFAKEDLISSLFIQTFVFVAFNKVITSQYFIWFLIFLPHFLSKTKLLTTDKITGISCLLLWIISQATWLYFAYKLEFLGENTFDNGLMYSSVFFFLSNCWCTMKFIQSL.

A run of 9 helical transmembrane segments spans residues 4–24 (LKYL…FGLY), 79–99 (WYHF…LIIL), 114–136 (MILS…GSAE), 156–176 (VILS…PIIY), 209–229 (IIIT…KYGW), 271–291 (IEKI…PLIF), 305–325 (FVFV…FLIF), 341–361 (ITGI…LYFA), and 375–395 (GLMY…MKFI).

This sequence belongs to the PIGM family.

The protein resides in the endoplasmic reticulum membrane. It participates in glycolipid biosynthesis; glycosylphosphatidylinositol-anchor biosynthesis. Functionally, mannosyltransferase involved in glycosylphosphatidylinositol-anchor biosynthesis. Transfers the first alpha-1,4-mannose to GlcN-acyl-PI during GPI precursor assembly. Required for cell wall integrity. The chain is GPI mannosyltransferase 1 (GPI14) from Candida albicans (strain SC5314 / ATCC MYA-2876) (Yeast).